The following is a 451-amino-acid chain: Signal transduction histidine-protein kinase ArlS (451 aa).

Transmembrane regions (helical) follow at residues 11–31 and 156–176; these read IIVT…IIIF and IIAL…SYVF. Residues 178–231 form the HAMP domain; it reads TQITKPLVSLSNKMIEIRRDGFQNKLQLNTNYEEIDNLANTFNEMMSQIEESFN. A Histidine kinase domain is found at 239 to 451; sequence DASHELRTPL…NKGTTFKIIF (213 aa). His-242 carries the phosphohistidine; by autocatalysis modification.

In terms of processing, autophosphorylated.

It is found in the cell membrane. It carries out the reaction ATP + protein L-histidine = ADP + protein N-phospho-L-histidine.. In terms of biological role, member of the two-component regulatory system ArlS/ArlR involved in the regulation of adhesion, autolysis, multidrug resistance and virulence. ArlS probably functions as a sensor protein kinase which is autophosphorylated at a histidine residue and transfers its phosphate group to ArlR. The sequence is that of Signal transduction histidine-protein kinase ArlS (arlS) from Staphylococcus aureus (strain MRSA252).